The sequence spans 215 residues: Nascent polypeptide-associated complex subunit alpha-2 (215 aa).

Positions 1–51 (MPGEATETVPATEQELPQSQAETGSGTASDSGESVPGIEEQDSTQTTTQKA) are disordered. Polar residues predominate over residues 9 to 32 (VPATEQELPQSQAETGSGTASDSG). Serine 43 and serine 132 each carry phosphoserine. An NAC-A/B domain is found at 70–135 (SRSEKRARKA…AKIQDLSQQA (66 aa)). Position 142 is an N6-acetyllysine; alternate (lysine 142). Lysine 142 participates in a covalent cross-link: Glycyl lysine isopeptide (Lys-Gly) (interchain with G-Cter in SUMO2); alternate. A Phosphothreonine modification is found at threonine 161. Serine 166, serine 186, serine 191, and serine 203 each carry phosphoserine. Positions 176–213 (VEVKDVKLVMSQANVSRAKAVRALKNNSNDIVNAIMEL) constitute a UBA domain. At threonine 214 the chain carries Phosphothreonine.

This sequence belongs to the NAC-alpha family. Part of the nascent polypeptide-associated complex (NAC), consisting of NACA and BTF3. NAC associates with ribosomes through the BTF3 subunit. Both subunits can contact nascent polypeptide chains. Expressed specifically in testis and skeletal muscle.

Its subcellular location is the cytoplasm. It localises to the nucleus. Prevents inappropriate targeting of non-secretory polypeptides to the endoplasmic reticulum (ER). Binds to nascent polypeptide chains as they emerge from the ribosome and blocks their interaction with the signal recognition particle (SRP), which normally targets nascent secretory peptides to the ER. Also reduces the inherent affinity of ribosomes for protein translocation sites in the ER membrane (M sites). The chain is Nascent polypeptide-associated complex subunit alpha-2 (NACA2) from Homo sapiens (Human).